A 444-amino-acid polypeptide reads, in one-letter code: uncharacterized protein (444 aa).

This is an uncharacterized protein from Saccharomyces cerevisiae (strain ATCC 204508 / S288c) (Baker's yeast).